We begin with the raw amino-acid sequence, 116 residues long: Iron-sulfur cluster insertion protein ErpA (116 aa).

Iron-sulfur cluster contacts are provided by Cys-44, Cys-108, and Cys-110.

It belongs to the HesB/IscA family. As to quaternary structure, homodimer. The cofactor is iron-sulfur cluster.

Functionally, required for insertion of 4Fe-4S clusters for at least IspG. In Pseudomonas fluorescens (strain ATCC BAA-477 / NRRL B-23932 / Pf-5), this protein is Iron-sulfur cluster insertion protein ErpA.